A 436-amino-acid chain; its full sequence is Chromosomal replication initiator protein DnaA (436 aa).

Residues 1–69 (MSIFTKIKKS…SELYEKETGI (69 aa)) are domain I, interacts with DnaA modulators. The domain II stretch occupies residues 69–97 (IKPKIDIVTKEISHRPLTIEEIIEPTTPS). The tract at residues 98-311 (VLIPEYTFES…GMITKINAMS (214 aa)) is domain III, AAA+ region. Glycine 142, glycine 144, lysine 145, and threonine 146 together coordinate ATP. The domain IV, binds dsDNA stretch occupies residues 312-436 (KILGISEITL…KNKIQIKKSE (125 aa)).

It belongs to the DnaA family. In terms of assembly, oligomerizes as a right-handed, spiral filament on DNA at oriC.

Its subcellular location is the cytoplasm. Its function is as follows. Plays an essential role in the initiation and regulation of chromosomal replication. ATP-DnaA binds to the origin of replication (oriC) to initiate formation of the DNA replication initiation complex once per cell cycle. Binds the DnaA box (a 9 base pair repeat at the origin) and separates the double-stranded (ds)DNA. Forms a right-handed helical filament on oriC DNA; dsDNA binds to the exterior of the filament while single-stranded (ss)DNA is stabiized in the filament's interior. The ATP-DnaA-oriC complex binds and stabilizes one strand of the AT-rich DNA unwinding element (DUE), permitting loading of DNA polymerase. After initiation quickly degrades to an ADP-DnaA complex that is not apt for DNA replication. Binds acidic phospholipids. This Nautilia profundicola (strain ATCC BAA-1463 / DSM 18972 / AmH) protein is Chromosomal replication initiator protein DnaA.